We begin with the raw amino-acid sequence, 148 residues long: Large ribosomal subunit protein uL15 (148 aa).

A compositionally biased stretch (basic and acidic residues) spans 1 to 40; sequence MADILQMHDLKPAPGANKDRIRVGRGEGSKGKTSGRGDKG. The segment at 1–47 is disordered; that stretch reads MADILQMHDLKPAPGANKDRIRVGRGEGSKGKTSGRGDKGTKKRYQV.

It belongs to the universal ribosomal protein uL15 family. As to quaternary structure, part of the 50S ribosomal subunit.

In terms of biological role, binds to the 23S rRNA. The sequence is that of Large ribosomal subunit protein uL15 from Bifidobacterium adolescentis (strain ATCC 15703 / DSM 20083 / NCTC 11814 / E194a).